Reading from the N-terminus, the 324-residue chain is D-erythronate dehydrogenase (324 aa).

Positions 125, 149, and 153 each coordinate NAD(+). Tyr-149 (proton acceptor) is an active-site residue.

The protein belongs to the NAD(P)-dependent epimerase/dehydratase family.

It catalyses the reaction D-erythronate + NAD(+) = 2-dehydro-D-erythronate + NADH + H(+). Its function is as follows. Catalyzes oxidation of D-erythronate to 2-oxo-tetronate. Can use either NAD(+) or NADP(+) as cosubstrate, with a preference for NAD(+). This chain is D-erythronate dehydrogenase, found in Cupriavidus necator (strain ATCC 17699 / DSM 428 / KCTC 22496 / NCIMB 10442 / H16 / Stanier 337) (Ralstonia eutropha).